Reading from the N-terminus, the 640-residue chain is 5-aminolevulinate synthase, non-specific, mitochondrial (640 aa).

The transit peptide at 1-56 (METVVRSCPFLSRVPQAFLQKAGKSLLFYAQNCPKMMEVGAKPAPRALSTAAVHYQ) directs the protein to the mitochondrion. Disordered regions lie at residues 60–103 (ETPP…TSQG) and 143–163 (EVAE…GGDP). Residues 75 to 92 (VQQTPDGSQQSPDGTQLP) show a composition bias toward polar residues. Residues arginine 217, serine 334, and lysine 353 each coordinate substrate. 3 residues coordinate pyridoxal 5'-phosphate: serine 386, histidine 414, and threonine 442. Residue lysine 445 is part of the active site. Lysine 445 carries the post-translational modification N6-(pyridoxal phosphate)lysine. Residues threonine 474 and threonine 475 each contribute to the pyridoxal 5'-phosphate site. Threonine 562 is a binding site for substrate. Position 576 is a hydroxyproline (proline 576).

It belongs to the class-II pyridoxal-phosphate-dependent aminotransferase family. In terms of assembly, homodimer. Interacts (hydroxylated form) with VHL. Pyridoxal 5'-phosphate is required as a cofactor. In terms of processing, in normoxia, is hydroxylated at Pro-576, promoting interaction with VHL, initiating ubiquitination and subsequent degradation via the proteasome. Ubiquitinated; in normoxia following hydroxylation and interaction with VHL, leading to its subsequent degradation via the proteasome.

It is found in the mitochondrion inner membrane. It catalyses the reaction succinyl-CoA + glycine + H(+) = 5-aminolevulinate + CO2 + CoA. The protein operates within porphyrin-containing compound metabolism; protoporphyrin-IX biosynthesis; 5-aminolevulinate from glycine: step 1/1. In terms of biological role, catalyzes the pyridoxal 5'-phosphate (PLP)-dependent condensation of succinyl-CoA and glycine to form aminolevulinic acid (ALA), with CoA and CO2 as by-products. The sequence is that of 5-aminolevulinate synthase, non-specific, mitochondrial (ALAS1) from Pongo abelii (Sumatran orangutan).